The following is a 694-amino-acid chain: GRB2-associated-binding protein 1 (694 aa).

At serine 2 the chain carries N-acetylserine. The PH domain occupies 5–116 (EVVCSGWLRK…WVRCICDICG (112 aa)). Disordered regions lie at residues 122 to 164 (EDPV…PYQL) and 194 to 231 (PEPT…SKHG). A compositionally biased stretch (polar residues) spans 145–157 (APPSTQADSSSAT). Over residues 194 to 203 (PEPTRTHADS) the composition is skewed to basic and acidic residues. Positions 204–231 (AKSTSSETDCNDNVPSHKNPASSQSKHG) are enriched in polar residues. A phosphoserine mark is found at serine 251, serine 253, serine 266, and serine 304. The tract at residues 323–386 (FPEGTLGQTS…TAGMSPSRSN (64 aa)) is disordered. Over residues 362-386 (IPRTASDTDSSYCIPTAGMSPSRSN) the composition is skewed to polar residues. At threonine 387 the chain carries Phosphothreonine. 2 positions are modified to phosphoserine: serine 402 and serine 454. Disordered regions lie at residues 493–532 (AHMG…VKPA) and 544–656 (ELQA…ADER). Alanine 547 is modified (phosphoserine). Residues 594-611 (PNLSSEDPNLFGSNSLDG) are compositionally biased toward polar residues. Tyrosine 627 is modified (phosphotyrosine). Phosphothreonine is present on threonine 638. Phosphoserine is present on serine 651. Phosphotyrosine is present on tyrosine 659. The tract at residues 671 to 694 (KSTREAWTDGRQSTESETPAKSVK) is disordered. A compositionally biased stretch (basic and acidic residues) spans 672-684 (STREAWTDGRQST). Serine 683 carries the post-translational modification Phosphoserine. The span at 685–694 (ESETPAKSVK) shows a compositional bias: polar residues.

This sequence belongs to the GAB family. Identified in a complex containing FRS2, GRB2, GAB1, PIK3R1 and SOS1. Forms a tripartite complex containing GAB1, METTL13 and SPRY2. Within the complex interacts with METTL13. Interacts with GRB2 and with other SH2-containing proteins. Interacts with phosphorylated LAT2. Interacts with PTPRJ. Interacts (phosphorylated) with PTPN11. Interacts with HCK. Phosphorylated in response to FGFR1 activation. Phosphorylated on tyrosine residue(s) by the epidermal growth factor receptor (EGFR) and the insulin receptor (INSR). Tyrosine phosphorylation of GAB1 mediates interaction with several proteins that contain SH2 domains. Phosphorylated on tyrosine residues by HCK upon IL6 signaling.

In terms of biological role, adapter protein that plays a role in intracellular signaling cascades triggered by activated receptor-type kinases. Plays a role in FGFR1 signaling. Probably involved in signaling by the epidermal growth factor receptor (EGFR) and the insulin receptor (INSR). Involved in the MET/HGF-signaling pathway. The sequence is that of GRB2-associated-binding protein 1 (GAB1) from Homo sapiens (Human).